We begin with the raw amino-acid sequence, 1555 residues long: UDP-glucose:glycoprotein glucosyltransferase 1 (1555 aa).

The N-terminal stretch at 1–42 is a signal peptide; that stretch reads MGCKGDASGACAAGALPVTGVCYKMGVLVVLTVLWLFSSVKA. 2 N-linked (GlcNAc...) asparagine glycosylation sites follow: N536 and N1228. The glucosyltransferase stretch occupies residues 1244-1555; the sequence is KTEEVKQDKD…REGPQKREEL (312 aa). The residue at position 1277 (S1277) is a Phosphoserine. Residues 1534–1555 form a disordered region; that stretch reads GALYKEKTKEPSREGPQKREEL. Positions 1552–1555 match the Prevents secretion from ER motif; it reads REEL.

The protein belongs to the glycosyltransferase 8 family. Monomer as well as in a tight complex with SELENOF. Interacts with METTL23. Part of a large chaperone multiprotein complex comprising DNAJB11, HSP90B1, HSPA5, HYOU, PDIA2, PDIA4, PDIA6, PPIB, SDF2L1, UGGT1 and very small amounts of ERP29, but not, or at very low levels, CALR nor CANX. The cofactor is Ca(2+). Requires Mn(2+) as cofactor. In terms of tissue distribution, higher levels in pancreas, skeletal muscle, kidney, and brain. Low levels in lung and heart.

It localises to the endoplasmic reticulum lumen. The protein resides in the endoplasmic reticulum-Golgi intermediate compartment. The enzyme catalyses N(4)-(alpha-D-Man-(1-&gt;2)-alpha-D-Man-(1-&gt;2)-alpha-D-Man-(1-&gt;3)-[alpha-D-Man-(1-&gt;2)-alpha-D-Man-(1-&gt;3)-[alpha-D-Man-(1-&gt;2)-alpha-D-Man-(1-&gt;6)]-alpha-D-Man-(1-&gt;6)]-beta-D-Man-(1-&gt;4)-beta-D-GlcNAc-(1-&gt;4)-beta-D-GlcNAc)-L-asparaginyl-[protein] (N-glucan mannose isomer 9A1,2,3B1,2,3) + UDP-alpha-D-glucose = N(4)-(alpha-D-Glc-(1-&gt;3)-alpha-D-Man-(1-&gt;2)-alpha-D-Man-(1-&gt;2)-alpha-D-Man-(1-&gt;3)-[alpha-D-Man-(1-&gt;2)-alpha-D-Man-(1-&gt;3)-[alpha-D-Man-(1-&gt;2)-alpha-D-Man-(1-&gt;6)]-alpha-D-Man-(1-&gt;6)]-beta-D-Man-(1-&gt;4)-beta-D-GlcNAc-(1-&gt;4)-beta-D-GlcNAc)-L-asparaginyl-[protein] + UDP + H(+). It participates in protein modification; protein glycosylation. Its activity is regulated as follows. Catalytic activity is enhanced by complex formation with SELENOF. Its function is as follows. Recognizes glycoproteins with minor folding defects. Reglucosylates single N-glycans near the misfolded part of the protein, thus providing quality control for protein folding in the endoplasmic reticulum. Reglucosylated proteins are recognized by calreticulin for recycling to the endoplasmic reticulum and refolding or degradation. The chain is UDP-glucose:glycoprotein glucosyltransferase 1 (UGGT1) from Homo sapiens (Human).